A 709-amino-acid polypeptide reads, in one-letter code: Anillin-like protein 3 (709 aa).

Residues 584-705 (DMEYRGFLHI…WLSAINDTLD (122 aa)) form the PH domain.

This Caenorhabditis elegans protein is Anillin-like protein 3 (ani-3).